Consider the following 48-residue polypeptide: Large ribosomal subunit protein bL32 (48 aa).

Over residues 1-20 (MAVPKRRVSKTRAAKRRTHY) the composition is skewed to basic residues. The segment at 1-48 (MAVPKRRVSKTRAAKRRTHYKVSLPMPIKDKDGSYKMPHRANPTTKEY) is disordered.

It belongs to the bacterial ribosomal protein bL32 family.

The chain is Large ribosomal subunit protein bL32 (rpmF) from Campylobacter jejuni subsp. jejuni serotype O:2 (strain ATCC 700819 / NCTC 11168).